Consider the following 229-residue polypeptide: Type III pantothenate kinase (229 aa).

An ATP-binding site is contributed by 7-14 (DVGNSSVD). Substrate contacts are provided by residues Y78 and 85–88 (GTDR). Catalysis depends on D87, which acts as the Proton acceptor. ATP is bound at residue T110. T161 provides a ligand contact to substrate.

This sequence belongs to the type III pantothenate kinase family. As to quaternary structure, homodimer. It depends on NH4(+) as a cofactor. Requires K(+) as cofactor.

Its subcellular location is the cytoplasm. It carries out the reaction (R)-pantothenate + ATP = (R)-4'-phosphopantothenate + ADP + H(+). Its pathway is cofactor biosynthesis; coenzyme A biosynthesis; CoA from (R)-pantothenate: step 1/5. Its function is as follows. Catalyzes the phosphorylation of pantothenate (Pan), the first step in CoA biosynthesis. The chain is Type III pantothenate kinase from Aquifex aeolicus (strain VF5).